A 791-amino-acid chain; its full sequence is Phenylalanine--tRNA ligase beta subunit (791 aa).

Residues Gly-39 to Lys-149 form the tRNA-binding domain. The B5 domain occupies Ile-403–Thr-478. Mg(2+)-binding residues include Asp-456, Asp-462, Glu-465, and Glu-466. An FDX-ACB domain is found at Pro-698 to Arg-791.

This sequence belongs to the phenylalanyl-tRNA synthetase beta subunit family. Type 1 subfamily. In terms of assembly, tetramer of two alpha and two beta subunits. Mg(2+) serves as cofactor.

Its subcellular location is the cytoplasm. The catalysed reaction is tRNA(Phe) + L-phenylalanine + ATP = L-phenylalanyl-tRNA(Phe) + AMP + diphosphate + H(+). The protein is Phenylalanine--tRNA ligase beta subunit of Clostridium tetani (strain Massachusetts / E88).